The sequence spans 160 residues: 2-C-methyl-D-erythritol 2,4-cyclodiphosphate synthase (160 aa).

2 residues coordinate a divalent metal cation: D11 and H13. 4-CDP-2-C-methyl-D-erythritol 2-phosphate-binding positions include 11 to 13 and 37 to 38; these read DVH and HS. Residue H45 coordinates a divalent metal cation. 4-CDP-2-C-methyl-D-erythritol 2-phosphate-binding positions include 59–61 and R145; that span reads DIG.

It belongs to the IspF family. As to quaternary structure, homotrimer. A divalent metal cation serves as cofactor.

The catalysed reaction is 4-CDP-2-C-methyl-D-erythritol 2-phosphate = 2-C-methyl-D-erythritol 2,4-cyclic diphosphate + CMP. It functions in the pathway isoprenoid biosynthesis; isopentenyl diphosphate biosynthesis via DXP pathway; isopentenyl diphosphate from 1-deoxy-D-xylulose 5-phosphate: step 4/6. In terms of biological role, involved in the biosynthesis of isopentenyl diphosphate (IPP) and dimethylallyl diphosphate (DMAPP), two major building blocks of isoprenoid compounds. Catalyzes the conversion of 4-diphosphocytidyl-2-C-methyl-D-erythritol 2-phosphate (CDP-ME2P) to 2-C-methyl-D-erythritol 2,4-cyclodiphosphate (ME-CPP) with a corresponding release of cytidine 5-monophosphate (CMP). In Neisseria meningitidis serogroup B (strain ATCC BAA-335 / MC58), this protein is 2-C-methyl-D-erythritol 2,4-cyclodiphosphate synthase.